Reading from the N-terminus, the 202-residue chain is FMN reductase (NADH) RutF 1 (202 aa).

The disordered stretch occupies residues 168–202 (PRTPRSGSAPAEPARAPRAVGARPAEGPALALRSA). Residues 171–196 (PRSGSAPAEPARAPRAVGARPAEGPA) show a composition bias toward low complexity.

It belongs to the non-flavoprotein flavin reductase family. RutF subfamily.

It catalyses the reaction FMNH2 + NAD(+) = FMN + NADH + 2 H(+). Functionally, catalyzes the reduction of FMN to FMNH2 which is used to reduce pyrimidine by RutA via the Rut pathway. This Methylorubrum extorquens (strain PA1) (Methylobacterium extorquens) protein is FMN reductase (NADH) RutF 1.